The following is a 212-amino-acid chain: Coat protein (212 aa).

This sequence belongs to the potexvirus capsid protein family.

The protein localises to the virion. In terms of biological role, required for genome encapsidation. Forms ribonucleoprotein complexes along with TGB1 helicase and viral RNA. The chain is Coat protein from Chenopodium album (Fat hen).